Consider the following 368-residue polypeptide: tRNA-specific 2-thiouridylase MnmA (368 aa).

ATP-binding positions include 12 to 19 and M38; that span reads AMSGGVDS. C110 functions as the Nucleophile in the catalytic mechanism. C110 and C207 are joined by a disulfide. G134 provides a ligand contact to ATP. Residues 157 to 159 form an interaction with tRNA region; the sequence is KDQ. Catalysis depends on C207, which acts as the Cysteine persulfide intermediate. The tract at residues 312–313 is interaction with tRNA; that stretch reads RY.

This sequence belongs to the MnmA/TRMU family.

The protein localises to the cytoplasm. The enzyme catalyses S-sulfanyl-L-cysteinyl-[protein] + uridine(34) in tRNA + AH2 + ATP = 2-thiouridine(34) in tRNA + L-cysteinyl-[protein] + A + AMP + diphosphate + H(+). Its function is as follows. Catalyzes the 2-thiolation of uridine at the wobble position (U34) of tRNA, leading to the formation of s(2)U34. This is tRNA-specific 2-thiouridylase MnmA from Geobacter metallireducens (strain ATCC 53774 / DSM 7210 / GS-15).